Here is a 1098-residue protein sequence, read N- to C-terminus: PAN2-PAN3 deadenylation complex catalytic subunit PAN2 (1098 aa).

4 WD repeats span residues 19–58 (ASKD…PFQL), 150–190 (TGFD…SVKS), 253–293 (PFPN…KLNV), and 300–338 (PASP…NFVN). The interval 340-466 (PAPLEEQDIP…SIFHLKSPTS (127 aa)) is linker. Positions 417–442 (RNISQPYQSLREPPGSNSNAPRFISE) are disordered. Positions 466-839 (SVPHCYSRLQ…KPVIIVYSEP (374 aa)) constitute a USP domain. One can recognise an Exonuclease domain in the interval 894 to 1067 (IAIDAEFVVS…EDAYTALMLF (174 aa)). A divalent metal cation is bound by residues aspartate 897, glutamate 899, aspartate 1006, and aspartate 1059.

This sequence belongs to the peptidase C19 family. PAN2 subfamily. As to quaternary structure, forms a heterotrimer with an asymmetric homodimer of the regulatory subunit PAN3 to form the poly(A)-nuclease (PAN) deadenylation complex. The cofactor is a divalent metal cation.

The protein resides in the cytoplasm. The catalysed reaction is Exonucleolytic cleavage of poly(A) to 5'-AMP.. With respect to regulation, positively regulated by the regulatory subunit PAN3. Functionally, catalytic subunit of the poly(A)-nuclease (PAN) deadenylation complex, one of two cytoplasmic mRNA deadenylases involved in mRNA turnover. PAN specifically shortens poly(A) tails of RNA and the activity is stimulated by poly(A)-binding protein PAB1. PAN deadenylation is followed by rapid degradation of the shortened mRNA tails by the CCR4-NOT complex. Deadenylated mRNAs are then degraded by two alternative mechanisms, namely exosome-mediated 3'-5' exonucleolytic degradation, or deadenylation-dependent mRNA decaping and subsequent 5'-3' exonucleolytic degradation by XRN1. May also be involved in post-transcriptional maturation of mRNA poly(A) tails. The protein is PAN2-PAN3 deadenylation complex catalytic subunit PAN2 of Meyerozyma guilliermondii (strain ATCC 6260 / CBS 566 / DSM 6381 / JCM 1539 / NBRC 10279 / NRRL Y-324) (Yeast).